Here is a 209-residue protein sequence, read N- to C-terminus: Uracil phosphoribosyltransferase (209 aa).

5-phospho-alpha-D-ribose 1-diphosphate is bound by residues R79, R104, and 131-139 (DPMLATGGS). Residues V194 and 199 to 201 (GDA) contribute to the uracil site. Residue D200 participates in 5-phospho-alpha-D-ribose 1-diphosphate binding.

The protein belongs to the UPRTase family. Mg(2+) is required as a cofactor.

The enzyme catalyses UMP + diphosphate = 5-phospho-alpha-D-ribose 1-diphosphate + uracil. Its pathway is pyrimidine metabolism; UMP biosynthesis via salvage pathway; UMP from uracil: step 1/1. Its activity is regulated as follows. Allosterically activated by GTP. Functionally, catalyzes the conversion of uracil and 5-phospho-alpha-D-ribose 1-diphosphate (PRPP) to UMP and diphosphate. The chain is Uracil phosphoribosyltransferase from Bacillus cereus (strain Q1).